Consider the following 110-residue polypeptide: Putative protein RIG (110 aa).

In terms of tissue distribution, expressed predominantly in brain and weakly in heart and lung. Expression is reduced or undetectable in cultured glioma cells, primary glioblastoma cells and malignant glioblastoma tumors.

Functionally, may serve as a molecular marker for or play a role in the malignant progression of glioblastomas. The polypeptide is Putative protein RIG (RIG) (Homo sapiens (Human)).